The following is a 141-amino-acid chain: Auxin-responsive protein SAUR63 (141 aa).

It belongs to the ARG7 family. As to expression, expressed in hypocotyls, cotyledons, petioles, young rosette leaves, apical portion of inflorescence stems, stamen filaments and petals.

It is found in the cell membrane. Functionally, may promote auxin-stimulated organ elongation, such as hypocotyls, stamen filaments and petals. The polypeptide is Auxin-responsive protein SAUR63 (Arabidopsis thaliana (Mouse-ear cress)).